The primary structure comprises 66 residues: Ejaculatory bulb-specific protein 2 (66 aa).

Positions 1-20 are cleaved as a signal peptide; it reads MIRILVLMITFTLMTGSALC.

As to expression, specifically expressed in the ejaculatory bulb and seminal fluid.

The protein localises to the secreted. Functionally, protein component of the posterior mating plug. The protein is Ejaculatory bulb-specific protein 2 of Drosophila melanogaster (Fruit fly).